We begin with the raw amino-acid sequence, 257 residues long: Cytochrome c oxidase subunit 3 (257 aa).

Transmembrane regions (helical) follow at residues 13–33, 36–56, 80–100, 154–174, 195–215, and 237–257; these read PWPI…VSYF, LSMY…FQWW, GMIL…WAFF, YISA…FTMF, FFMT…FLLV, and AWYW…MYWW.

This sequence belongs to the cytochrome c oxidase subunit 3 family. As to quaternary structure, component of the cytochrome c oxidase (complex IV, CIV), a multisubunit enzyme composed of a catalytic core of 3 subunits and several supernumerary subunits. The complex exists as a monomer or a dimer and forms supercomplexes (SCs) in the inner mitochondrial membrane with ubiquinol-cytochrome c oxidoreductase (cytochrome b-c1 complex, complex III, CIII).

Its subcellular location is the mitochondrion inner membrane. It carries out the reaction 4 Fe(II)-[cytochrome c] + O2 + 8 H(+)(in) = 4 Fe(III)-[cytochrome c] + 2 H2O + 4 H(+)(out). Component of the cytochrome c oxidase, the last enzyme in the mitochondrial electron transport chain which drives oxidative phosphorylation. The respiratory chain contains 3 multisubunit complexes succinate dehydrogenase (complex II, CII), ubiquinol-cytochrome c oxidoreductase (cytochrome b-c1 complex, complex III, CIII) and cytochrome c oxidase (complex IV, CIV), that cooperate to transfer electrons derived from NADH and succinate to molecular oxygen, creating an electrochemical gradient over the inner membrane that drives transmembrane transport and the ATP synthase. Cytochrome c oxidase is the component of the respiratory chain that catalyzes the reduction of oxygen to water. Electrons originating from reduced cytochrome c in the intermembrane space (IMS) are transferred via the dinuclear copper A center (CU(A)) of subunit 2 and heme A of subunit 1 to the active site in subunit 1, a binuclear center (BNC) formed by heme A3 and copper B (CU(B)). The BNC reduces molecular oxygen to 2 water molecules using 4 electrons from cytochrome c in the IMS and 4 protons from the mitochondrial matrix. This is Cytochrome c oxidase subunit 3 (COIII) from Rhipicephalus sanguineus (Brown dog tick).